Consider the following 225-residue polypeptide: MARVSELAFLLAATLAISLHMQEAGVVKFDIKNQCGYTVWAAGLPGGGKRLDQGQTWTVNLAAGTASARFWGRTGCTFDASGKGSCQTGDCGGQLSCTVSGAVPATLAEYTQSDQDYYDVSLVDGFNIPLAINPTNAQCTAPACKADINAVCPSELKVDGGCNSACNVFKTDQYCCRNAYVDNCPATNYSKIFKNQCPQAYSYAKDDTATFACASGTDYSIVFCP.

The N-terminal stretch at 1-26 (MARVSELAFLLAATLAISLHMQEAGV) is a signal peptide. Cystine bridges form between cysteine 35-cysteine 224, cysteine 76-cysteine 86, cysteine 91-cysteine 97, cysteine 139-cysteine 213, cysteine 144-cysteine 197, cysteine 152-cysteine 162, cysteine 166-cysteine 175, and cysteine 176-cysteine 184. 3 igE-binding regions span residues 146-157 (ADINAVCPSELK), 158-170 (VDGGCNSACNVFK), and 178-191 (NAYVDNCPATNYSK).

Belongs to the thaumatin family. In terms of tissue distribution, expressed in pollen (at protein level).

The chain is Pathogenesis-related 5 protein Jun a 3.0101 from Juniperus ashei (Ozark white cedar).